Here is a 296-residue protein sequence, read N- to C-terminus: ATP synthase gamma chain (296 aa).

The protein belongs to the ATPase gamma chain family. F-type ATPases have 2 components, CF(1) - the catalytic core - and CF(0) - the membrane proton channel. CF(1) has five subunits: alpha(3), beta(3), gamma(1), delta(1), epsilon(1). CF(0) has three main subunits: a, b and c.

The protein resides in the cell inner membrane. Functionally, produces ATP from ADP in the presence of a proton gradient across the membrane. The gamma chain is believed to be important in regulating ATPase activity and the flow of protons through the CF(0) complex. In Methylorubrum extorquens (strain PA1) (Methylobacterium extorquens), this protein is ATP synthase gamma chain.